The chain runs to 155 residues: Small ribosomal subunit protein uS7cz/uS7cy (155 aa).

The protein belongs to the universal ribosomal protein uS7 family. As to quaternary structure, part of the 30S ribosomal subunit.

Its subcellular location is the plastid. One of the primary rRNA binding proteins, it binds directly to 16S rRNA where it nucleates assembly of the head domain of the 30S subunit. The sequence is that of Small ribosomal subunit protein uS7cz/uS7cy (rps7-A) from Cuscuta exaltata (Tall dodder).